Reading from the N-terminus, the 283-residue chain is MIIHPQFDPVLISIGPLAVRWYALSYILGFILFTFLGRRRIAQGLSVFTKESLDDFLTWGILGVIFGGRLGYVLFYKFSDYLAHPLDIFKVWEGGMSFHGGFLGVVIAIWLFGRKHGIGFLKLMDTVAPLVPLGLASGRIGNFINGELWGRVTDINAFWAMGFPQARYEDLEAAAHNPLWAEWLQQYGMLPRHPSQLYQFALEGICLFAVVWLFSKKQRPTGQVASLFLGGYGIFRFIAEFARQPDDYLGLLTLGLSMGQWLSVPMIVLGIVGFVRFGMKKQH.

4 helical membrane passes run 17 to 37 (LAVRWYALSYILGFILFTFLG), 56 to 76 (FLTWGILGVIFGGRLGYVLFY), 92 to 112 (WEGGMSFHGGFLGVVIAIWLF), and 117 to 137 (GIGFLKLMDTVAPLVPLGLAS). Position 139 (R139) interacts with a 1,2-diacyl-sn-glycero-3-phospho-(1'-sn-glycerol). The next 3 helical transmembrane spans lie at 194-214 (PSQLYQFALEGICLFAVVWLF), 222-242 (GQVASLFLGGYGIFRFIAEFA), and 255-275 (GLSMGQWLSVPMIVLGIVGFV).

This sequence belongs to the Lgt family.

It localises to the cell inner membrane. The catalysed reaction is L-cysteinyl-[prolipoprotein] + a 1,2-diacyl-sn-glycero-3-phospho-(1'-sn-glycerol) = an S-1,2-diacyl-sn-glyceryl-L-cysteinyl-[prolipoprotein] + sn-glycerol 1-phosphate + H(+). It functions in the pathway protein modification; lipoprotein biosynthesis (diacylglyceryl transfer). In terms of biological role, catalyzes the transfer of the diacylglyceryl group from phosphatidylglycerol to the sulfhydryl group of the N-terminal cysteine of a prolipoprotein, the first step in the formation of mature lipoproteins. In Neisseria meningitidis serogroup C (strain 053442), this protein is Phosphatidylglycerol--prolipoprotein diacylglyceryl transferase.